Reading from the N-terminus, the 359-residue chain is 3-dehydroquinate synthase (359 aa).

NAD(+)-binding positions include 71–76, 105–109, 129–130, Lys-142, and Lys-151; these read DAEAAK, GAVTD, and TT. Zn(2+) contacts are provided by Glu-184, His-247, and His-263.

The protein belongs to the sugar phosphate cyclases superfamily. Dehydroquinate synthase family. The cofactor is NAD(+). Requires Co(2+) as cofactor. Zn(2+) serves as cofactor.

The protein localises to the cytoplasm. It catalyses the reaction 7-phospho-2-dehydro-3-deoxy-D-arabino-heptonate = 3-dehydroquinate + phosphate. It participates in metabolic intermediate biosynthesis; chorismate biosynthesis; chorismate from D-erythrose 4-phosphate and phosphoenolpyruvate: step 2/7. Functionally, catalyzes the conversion of 3-deoxy-D-arabino-heptulosonate 7-phosphate (DAHP) to dehydroquinate (DHQ). The chain is 3-dehydroquinate synthase from Leifsonia xyli subsp. xyli (strain CTCB07).